The primary structure comprises 429 residues: Enolase (429 aa).

Position 168 (glutamine 168) interacts with (2R)-2-phosphoglycerate. The Proton donor role is filled by glutamate 210. Residues aspartate 247, glutamate 288, and aspartate 315 each coordinate Mg(2+). Positions 340, 369, 370, and 391 each coordinate (2R)-2-phosphoglycerate. Residue lysine 340 is the Proton acceptor of the active site.

It belongs to the enolase family. Mg(2+) serves as cofactor.

It localises to the cytoplasm. Its subcellular location is the secreted. The protein localises to the cell surface. It catalyses the reaction (2R)-2-phosphoglycerate = phosphoenolpyruvate + H2O. The protein operates within carbohydrate degradation; glycolysis; pyruvate from D-glyceraldehyde 3-phosphate: step 4/5. Its function is as follows. Catalyzes the reversible conversion of 2-phosphoglycerate (2-PG) into phosphoenolpyruvate (PEP). It is essential for the degradation of carbohydrates via glycolysis. The sequence is that of Enolase from Nostoc sp. (strain PCC 7120 / SAG 25.82 / UTEX 2576).